The following is an 81-amino-acid chain: Putative membrane protein insertion efficiency factor (81 aa).

Residues 61–81 form a disordered region; the sequence is NDGGFDPVPPAPSSRTSSIAE.

Belongs to the UPF0161 family.

It localises to the cell inner membrane. Functionally, could be involved in insertion of integral membrane proteins into the membrane. The polypeptide is Putative membrane protein insertion efficiency factor (Pseudomonas putida (strain ATCC 700007 / DSM 6899 / JCM 31910 / BCRC 17059 / LMG 24140 / F1)).